Here is a 144-residue protein sequence, read N- to C-terminus: L-fucose mutarotase (144 aa).

His22 acts as the Proton donor in catalysis. Substrate is bound by residues Asp30, Arg109, and 131-133 (YGN).

This sequence belongs to the RbsD / FucU family. FucU mutarotase subfamily. In terms of assembly, homodecamer.

It localises to the cytoplasm. The enzyme catalyses alpha-L-fucose = beta-L-fucose. The protein operates within carbohydrate metabolism; L-fucose metabolism. Its function is as follows. Involved in the anomeric conversion of L-fucose. The protein is L-fucose mutarotase of Histophilus somni (strain 2336) (Haemophilus somnus).